The chain runs to 320 residues: Malate dehydrogenase (320 aa).

NAD(+) is bound by residues 10-15 and Asp-34; that span reads GSGMIG. Substrate-binding residues include Arg-83 and Arg-89. Residues Asn-96 and 119 to 121 each bind NAD(+); that span reads ITN. Residues Asn-121 and Arg-152 each coordinate substrate. His-176 functions as the Proton acceptor in the catalytic mechanism.

It belongs to the LDH/MDH superfamily. MDH type 3 family.

The enzyme catalyses (S)-malate + NAD(+) = oxaloacetate + NADH + H(+). Catalyzes the reversible oxidation of malate to oxaloacetate. This chain is Malate dehydrogenase, found in Brucella canis (strain ATCC 23365 / NCTC 10854 / RM-666).